We begin with the raw amino-acid sequence, 417 residues long: NADH-quinone oxidoreductase subunit D (417 aa).

The protein belongs to the complex I 49 kDa subunit family. As to quaternary structure, NDH-1 is composed of 14 different subunits. Subunits NuoB, C, D, E, F, and G constitute the peripheral sector of the complex.

It is found in the cell inner membrane. It carries out the reaction a quinone + NADH + 5 H(+)(in) = a quinol + NAD(+) + 4 H(+)(out). Its function is as follows. NDH-1 shuttles electrons from NADH, via FMN and iron-sulfur (Fe-S) centers, to quinones in the respiratory chain. The immediate electron acceptor for the enzyme in this species is believed to be ubiquinone. Couples the redox reaction to proton translocation (for every two electrons transferred, four hydrogen ions are translocated across the cytoplasmic membrane), and thus conserves the redox energy in a proton gradient. This Coxiella burnetii (strain CbuG_Q212) (Coxiella burnetii (strain Q212)) protein is NADH-quinone oxidoreductase subunit D.